Reading from the N-terminus, the 352-residue chain is Uroporphyrinogen decarboxylase (352 aa).

Substrate is bound by residues 27-31 (RQAGR), D77, Y154, T209, and H325.

This sequence belongs to the uroporphyrinogen decarboxylase family. Homodimer.

It is found in the cytoplasm. The catalysed reaction is uroporphyrinogen III + 4 H(+) = coproporphyrinogen III + 4 CO2. The protein operates within porphyrin-containing compound metabolism; protoporphyrin-IX biosynthesis; coproporphyrinogen-III from 5-aminolevulinate: step 4/4. Functionally, catalyzes the decarboxylation of four acetate groups of uroporphyrinogen-III to yield coproporphyrinogen-III. This chain is Uroporphyrinogen decarboxylase, found in Legionella pneumophila subsp. pneumophila (strain Philadelphia 1 / ATCC 33152 / DSM 7513).